A 92-amino-acid polypeptide reads, in one-letter code: Endoribonuclease VapD homolog (92 aa).

Belongs to the VapD ribonuclease family. As to quaternary structure, homodimer.

Cleaves ssRNA, mostly between U:A. The polypeptide is Endoribonuclease VapD homolog (Neisseria gonorrhoeae).